We begin with the raw amino-acid sequence, 281 residues long: MLLSLLSMNINYNSITSIKQTLKEKKIAPRKLWGQNYLINENIRQKIIESLDIKENEKIWEIGPGLGAMTDILLKKTNLLTAFEIDLKYSEILNEKFGKLKNFKLIKGDFLKKYPNENKNIDKIFSNLPYNIASKVISKLIEENFLKEMVFTVQKELADRITAKINSKNYSSFTVLVQSHFTVIKIIDIGGNNFYPAPKVKSTTLKLIPKKHNIKDFKEFNKLIRTVFSSRRKKLKNTIINFITNKAILRENFLKEYLDKRPENISVEEFIQISNTLTAYH.

Asn-36, Leu-38, Gly-63, Glu-84, Asp-109, and Asn-127 together coordinate S-adenosyl-L-methionine.

It belongs to the class I-like SAM-binding methyltransferase superfamily. rRNA adenine N(6)-methyltransferase family. RsmA subfamily.

The protein localises to the cytoplasm. It carries out the reaction adenosine(1518)/adenosine(1519) in 16S rRNA + 4 S-adenosyl-L-methionine = N(6)-dimethyladenosine(1518)/N(6)-dimethyladenosine(1519) in 16S rRNA + 4 S-adenosyl-L-homocysteine + 4 H(+). Its function is as follows. Specifically dimethylates two adjacent adenosines (A1518 and A1519) in the loop of a conserved hairpin near the 3'-end of 16S rRNA in the 30S particle. May play a critical role in biogenesis of 30S subunits. This Borreliella afzelii (strain PKo) (Borrelia afzelii) protein is Ribosomal RNA small subunit methyltransferase A.